Reading from the N-terminus, the 399-residue chain is MTRTVLVLNSGSSSLKFQLLEPDSGASLADGIVERIGEDSSSASLVCGEREVTHSERVPDHEAALRTAYGLFDEAGAELGSVGLVAVGHRVVHGGPDLYQPTLIDDALVDTLESLAPLAPLHNPPAVLGIRGARKAFPDLPHVAVFDTAYFHDLPVAAATYAIDRDLSEQWHIRRYGFHGTSHQYVSEQAALFLDVPLSSLSQIVLHLGNGASASAILGGRPIDTSMGLTPMEGLVMGTRSGDVDPGVLVYLWRTAGMSVDEIETMLNKRSGVRGLGGEIDFRVLHQRIESGDESDRENAQLAYDVYIHRLRKYIGAYLALLGSTDVIVFTAGVGENDAAVRRDALSGMGRLGIELDEHLNESPSHTARRISAETSPTTVLVIPTNEELAIARACVEVI.

Asn9 provides a ligand contact to Mg(2+). Residue Lys16 participates in ATP binding. Arg90 contributes to the substrate binding site. Asp147 functions as the Proton donor/acceptor in the catalytic mechanism. ATP-binding positions include 207–211, 281–283, and 333–337; these read HLGNG, DFR, and GVGEN. Glu387 serves as a coordination point for Mg(2+).

It belongs to the acetokinase family. As to quaternary structure, homodimer. Requires Mg(2+) as cofactor. Mn(2+) serves as cofactor.

The protein resides in the cytoplasm. It catalyses the reaction acetate + ATP = acetyl phosphate + ADP. Its pathway is metabolic intermediate biosynthesis; acetyl-CoA biosynthesis; acetyl-CoA from acetate: step 1/2. In terms of biological role, catalyzes the formation of acetyl phosphate from acetate and ATP. Can also catalyze the reverse reaction. The sequence is that of Acetate kinase from Mycobacterium sp. (strain KMS).